Reading from the N-terminus, the 124-residue chain is Salivary protein 15 Iric-3 (124 aa).

A signal peptide spans methionine 1 to alanine 22. N-linked (GlcNAc...) asparagine glycosylation is found at asparagine 82 and asparagine 93. The CD4-binding stretch occupies residues glycine 105–cysteine 124.

This sequence belongs to the salp15 family. As to quaternary structure, interacts with host CD4. Interacts with host DC-SIGN (CD209). Interacts with Borrelia outer surface protein C (OspC). As to expression, expressed in salivary glands. Detected in fed adult female.

It localises to the secreted. Salivary tick protein that downregulates host immune system by binding to both dendritic cells, and CD4(+) T cells. Specifically binds to the CD4 coreceptor on T cells. This interaction prevents the activation of the Src kinase, Lck, and its downstream substrate Zap-70, and results in deficient activation of PLCgamma1, the repression of calcium fluxes triggered by T-cell antigen receptor (TCR) ligation, and a subsequent reduction in interleukin-2 production. This salivary protein also binds to DC-SIGN (CD209) on dendritic cells (DC) and activates the Raf-1 kinase/MEK signaling pathway that results in down-regulating expression of pro-inflammatory cytokines. Furthermore, it inhibits T cell proliferation induced by DCs. In addition, it inhibits in vitro keratinocyte inflammation induced by Borrelia burgdorferi or by the major outer surface protein (OspC) of Borrelia. In addition, it downregulates chemokines and monocyte chemoattractant protein 1, as well as several antimicrobial peptides such as defensins, cathelicidin, psoriasin, and RNase 7. Apart from its immunomodulatory activities, it is also associated with protection of Borrelia spirochetes from antibody-mediated killing through its binding to OspC. In vivo, tests on different immune disease animal models show promising therapeutic results, e.g., in inhibiting HIV infection, experimental autoimmune encephalomyelitis, transplantation rejection, and asthma. The chain is Salivary protein 15 Iric-3 from Ixodes ricinus (Common tick).